Here is a 273-residue protein sequence, read N- to C-terminus: Proteasome subunit beta type-7-A (273 aa).

A propeptide spans 1-37 (MSQSTVDVPPKGGFSFDLCKRNDMLTQKGLKAPSFLK) (removed in mature form). T40 (nucleophile) is an active-site residue.

This sequence belongs to the peptidase T1B family. In terms of assembly, component of the 20S core complex of the 26S proteasome. The 26S proteasome is composed of a core protease (CP), known as the 20S proteasome, capped at one or both ends by the 19S regulatory particle (RP/PA700). The 20S proteasome core is composed of 28 subunits that are arranged in four stacked rings, resulting in a barrel-shaped structure. The two end rings are each formed by seven alpha subunits, and the two central rings are each formed by seven beta subunits. The catalytic chamber with the active sites is on the inside of the barrel.

Its subcellular location is the cytoplasm. It localises to the nucleus. The catalysed reaction is Cleavage of peptide bonds with very broad specificity.. In terms of biological role, the proteasome is a multicatalytic proteinase complex which is characterized by its ability to cleave peptides with Arg, Phe, Tyr, Leu, and Glu adjacent to the leaving group at neutral or slightly basic pH. The proteasome has an ATP-dependent proteolytic activity. This Arabidopsis thaliana (Mouse-ear cress) protein is Proteasome subunit beta type-7-A (PBB1).